The following is a 256-amino-acid chain: Cell division protein DivIB (256 aa).

Residues 1–23 (MSKDLISTDEYIKIKKKRKRIKK) are Cytoplasmic-facing. A helical transmembrane segment spans residues 24-44 (IVVLFIFLISILVTLCLKIPY). The region spanning 45 to 113 (FNIESIEIKG…NKLQIYVKER (69 aa)) is the POTRA domain. The Extracellular segment spans residues 45–256 (FNIESIEIKG…EGNPVFYIEK (212 aa)).

It belongs to the FtsQ/DivIB family. DivIB subfamily.

It is found in the cell membrane. Cell division protein that may be involved in stabilizing or promoting the assembly of the division complex. The chain is Cell division protein DivIB from Clostridium botulinum (strain Hall / ATCC 3502 / NCTC 13319 / Type A).